Consider the following 314-residue polypeptide: Dihydropteroate synthase (314 aa).

Residues 10-294 (TVICGIINVT…DVASHRMAVE (285 aa)) enclose the Pterin-binding domain. Asparagine 17 provides a ligand contact to Mg(2+). Residues aspartate 91, asparagine 110, aspartate 201, lysine 237, and 282-284 (RVH) contribute to the (7,8-dihydropterin-6-yl)methyl diphosphate site.

It belongs to the DHPS family. Homodimer. Mg(2+) is required as a cofactor.

The catalysed reaction is (7,8-dihydropterin-6-yl)methyl diphosphate + 4-aminobenzoate = 7,8-dihydropteroate + diphosphate. Its pathway is cofactor biosynthesis; tetrahydrofolate biosynthesis; 7,8-dihydrofolate from 2-amino-4-hydroxy-6-hydroxymethyl-7,8-dihydropteridine diphosphate and 4-aminobenzoate: step 1/2. With respect to regulation, is potently inhibited by sulfonamides, with Ki values between 25 nM and 850 nM. Catalyzes the condensation of para-aminobenzoate (pABA) with 6-hydroxymethyl-7,8-dihydropterin diphosphate (DHPt-PP) to form 7,8-dihydropteroate, the immediate precursor of folate derivatives. In terms of biological role, is the target for the sulfonamide group of antimicrobial drugs. Sulfonamide drugs act as pABA analogs, they inhibit the reaction by acting as alternative substrates, leading to a 'dead end' sulfa-pterin product. This is Dihydropteroate synthase (sulA) from Streptococcus pneumoniae (strain ATCC BAA-255 / R6).